We begin with the raw amino-acid sequence, 321 residues long: Glutamyl-Q tRNA(Asp) synthetase (321 aa).

Residues 25–29 (RFAPS) and Glu61 each bind L-glutamate. Positions 28–38 (PSPSGDLHFGS) match the 'HIGH' region motif. Zn(2+) is bound by residues Cys117, Cys119, Tyr131, and Cys135. The L-glutamate site is built by Tyr188 and Arg206. A 'KMSKS' region motif is present at residues 244–248 (KLSKQ). Lys247 lines the ATP pocket.

Belongs to the class-I aminoacyl-tRNA synthetase family. GluQ subfamily. It depends on Zn(2+) as a cofactor.

In terms of biological role, catalyzes the tRNA-independent activation of glutamate in presence of ATP and the subsequent transfer of glutamate onto a tRNA(Asp). Glutamate is transferred on the 2-amino-5-(4,5-dihydroxy-2-cyclopenten-1-yl) moiety of the queuosine in the wobble position of the QUC anticodon. The protein is Glutamyl-Q tRNA(Asp) synthetase of Yersinia pestis.